Here is a 505-residue protein sequence, read N- to C-terminus: Aminoaldehyde dehydrogenase 2 (505 aa).

Na(+) contacts are provided by isoleucine 31 and aspartate 99. Residues 159–161 and 185–188 contribute to the NAD(+) site; these read TPW and KPSE. Position 189 (leucine 189) interacts with Na(+). Residue 238–242 participates in NAD(+) binding; the sequence is GSGPT. Glutamate 260 acts as the Proton acceptor in catalysis. Residue leucine 261 participates in NAD(+) binding. Cysteine 295 functions as the Nucleophile in the catalytic mechanism. 2 residues coordinate NAD(+): glutamate 394 and tryptophan 460.

Belongs to the aldehyde dehydrogenase family. Forms homodimers.

It carries out the reaction 4-aminobutanal + NAD(+) + H2O = 4-aminobutanoate + NADH + 2 H(+). The catalysed reaction is 3-aminopropanal + NAD(+) + H2O = beta-alanine + NADH + 2 H(+). The enzyme catalyses 4-(trimethylamino)butanal + NAD(+) + H2O = 4-(trimethylamino)butanoate + NADH + 2 H(+). It catalyses the reaction 4-guanidinobutanal + NAD(+) + H2O = 4-guanidinobutanoate + NADH + 2 H(+). The protein operates within amine and polyamine biosynthesis; betaine biosynthesis via choline pathway; betaine from betaine aldehyde: step 1/1. Its function is as follows. Dehydrogenase that catalyzes the oxidation of several aminoaldehydes. Metabolizes and detoxifies aldehyde products of polyamine degradation to non-toxic amino acids. Catalyzes the oxidation of 4-aminobutanal and 3-aminopropanal to 4-aminobutanoate and beta-alanine, respectively. Catalyzes the oxidation of 4-(trimethylamino)butanal and 4-guanidinobutanal to 4-trimethylammoniobutanoate and 4-guanidinobutanoate, respectively. The polypeptide is Aminoaldehyde dehydrogenase 2 (Solanum lycopersicum (Tomato)).